We begin with the raw amino-acid sequence, 460 residues long: MGNTESGSHQKGLSRILPEEKAEIEQFFENMCRMQSGPKKSVGLQYFQDALRNSLPCSISQRIFDGIQSVRTNSKSSTMSAEISKEQFLVFYVDLLRGTAEEKSQVICDMISCNNSEHMKGHQVQKFLEDIIAAVIYVLKQQSLLKGWNLENMRDCTLGTQGLAMQLLSQLQSIDGQKFERQELLDSPCSKSCIEDWLYKIPMISLFVRVMLTVGLSILKHHTEHQKDMKTLLPKCTGMKNTSFVSLLDLPAVMHLNYYLPYEVQHKWRLLFSSQIHGESFSQLCGHILDQGPCLLIVKDSDGFVFGGFASQSWKVKPQFQGDSRCFLFSISPRLDVYTYTGYNDHYMYLNRAQQSLPNGLGMGGQHEYFGFWIDSNFGIGHSKAKPSCTTYNSPQLSAKEEFSIHTVEVWAVGDVPEHLLAKNPRSILDSDTEARALLEMAGQTRQSDGLREVTEEDES.

The region spanning 246-414 is the TLDc domain; that stretch reads SLLDLPAVMH…IHTVEVWAVG (169 aa).

Its subcellular location is the membrane. The protein resides in the cytoplasm. The protein localises to the lysosome. Functionally, activates an alternative mTOR signaling to regulate cell proliferation and migration. In Xenopus laevis (African clawed frog), this protein is MTOR-associated protein MEAK7 (meak7).